The primary structure comprises 401 residues: MEKKKVVLAYSGGLDTSVAIKWLQEKNYDVIALCLDLGEGEDLEFVKEKALSVGAIKSYMIDVQEEFMNEYALVALQGHTLYEGKYPLVSALSRPLIAKKLVEIAELEGASAVAHGCTGKGNDQVRFEVSIQALNPYLEVIAPVREWKWSREEEIAYAKENDVPIPINLDSPFSIDQNLWGRSNECGILEDPWAAPPEDAYEMTVPLENTPDQPEFVEIGFEEGVPTTLNGTTYSLSQLMKTLNSLAGKHGIGRIDHVENRLVGIKSREVYECPAAMTLLTAHKELEDLTLVKEVAHFKPMMEQKLTELIYNGLWFSPLKQALVAFLQETQKTVSGTVRVKLFKGHAIVEGRKSEYSLYDENLATYTVNDEFNHDAAVGFISLFGLPTKVYSQVNQKKVEA.

9–17 (AYSGGLDTS) provides a ligand contact to ATP. Tyr86 is an L-citrulline binding site. Gly116 is a binding site for ATP. Thr118, Asn122, and Asp123 together coordinate L-aspartate. Asn122 contacts L-citrulline. The L-citrulline site is built by Arg126, Ser174, Ser183, Glu259, and Tyr271.

Belongs to the argininosuccinate synthase family. Type 1 subfamily. As to quaternary structure, homotetramer.

The protein resides in the cytoplasm. The catalysed reaction is L-citrulline + L-aspartate + ATP = 2-(N(omega)-L-arginino)succinate + AMP + diphosphate + H(+). Its pathway is amino-acid biosynthesis; L-arginine biosynthesis; L-arginine from L-ornithine and carbamoyl phosphate: step 2/3. The polypeptide is Argininosuccinate synthase (Bacillus cytotoxicus (strain DSM 22905 / CIP 110041 / 391-98 / NVH 391-98)).